Consider the following 259-residue polypeptide: DNA utilization protein HofM (259 aa).

Required for the use of extracellular DNA as a nutrient. The chain is DNA utilization protein HofM (hofM) from Escherichia coli (strain K12).